The following is a 113-amino-acid chain: MIEGVGVDIVAVERIKKIYEKCGEKFLNKVFTEGEISYSFSHANPFPHLAARFAVKEAVIKALKKQKGLTLKNIEVRNNSDGSPEVKIPGFNKKIFISISHEKNYAVAFVVIT.

The Mg(2+) site is built by D8 and E57.

Belongs to the P-Pant transferase superfamily. AcpS family. Requires Mg(2+) as cofactor.

The protein localises to the cytoplasm. It catalyses the reaction apo-[ACP] + CoA = holo-[ACP] + adenosine 3',5'-bisphosphate + H(+). In terms of biological role, transfers the 4'-phosphopantetheine moiety from coenzyme A to a Ser of acyl-carrier-protein. The polypeptide is Holo-[acyl-carrier-protein] synthase (Thermodesulfovibrio yellowstonii (strain ATCC 51303 / DSM 11347 / YP87)).